A 323-amino-acid chain; its full sequence is Ankyrin repeat and SOCS box protein 11 (323 aa).

7 ANK repeats span residues 64-93 (ADRSPLHEAAAQGRLLALKTLIAQGINVNL), 97-126 (NRVSSLHEACLGGHVACAKALLENGAHVNA), 130-159 (HGATPLFNACCSGSAACVNVLLEFGAKAQL), 162-191 (YLASPIHEAVKRGHRECMEILLTKDVNIEQ), 195-224 (QLGTPLYVACTYQRVDCVKKLLELGASVDH), 227-256 (WLDTPLHAAVRQSSVEVINLLTVYGANLNL), and 260-289 (QGKSALDLAVPKSSVRQALLLHEGPPALSQ). The SOCS box domain occupies 273–323 (SVRQALLLHEGPPALSQLCRLCVRKCLGRTCHHAIYALGLPESLEKFLLYQ).

Belongs to the ankyrin SOCS box (ASB) family. Substrate-recognition component of the ECS(ASB11) complex, composed of ASB11, CUL5, ELOB, ELOC and RNF7/RBX2.

It localises to the endoplasmic reticulum. It functions in the pathway protein modification; protein ubiquitination. In terms of biological role, substrate-recognition component of a cullin-5-RING E3 ubiquitin-protein ligase complex (ECS complex, also named CRL5 complex), which mediates the ubiquitination and subsequent proteasomal degradation of target proteins, such as BIK, DIRAS2 and RPN1. The ECS(ASB11) complex acts as a regulator of the endoplasmic reticulum unfolded protein response by mediating ubiquitination and degradation of BIK. The chain is Ankyrin repeat and SOCS box protein 11 (Asb11) from Mus musculus (Mouse).